Here is a 1146-residue protein sequence, read N- to C-terminus: Transcription-repair-coupling factor (1146 aa).

The Helicase ATP-binding domain occupies 617 to 778; the sequence is DMCQPKAMDR…MNGIRDLSII (162 aa). Position 630–637 (630–637) interacts with ATP; that stretch reads GDVGFGKT. A DEEH box motif is present at residues 731–734; it reads DEEH. Residues 800-953 enclose the Helicase C-terminal domain; the sequence is VREAILREIL…GFILATHDLE (154 aa).

It in the N-terminal section; belongs to the UvrB family. In the C-terminal section; belongs to the helicase family. RecG subfamily.

The protein localises to the cytoplasm. Its function is as follows. Couples transcription and DNA repair by recognizing RNA polymerase (RNAP) stalled at DNA lesions. Mediates ATP-dependent release of RNAP and its truncated transcript from the DNA, and recruitment of nucleotide excision repair machinery to the damaged site. The chain is Transcription-repair-coupling factor from Haemophilus influenzae (strain ATCC 51907 / DSM 11121 / KW20 / Rd).